Here is a 339-residue protein sequence, read N- to C-terminus: Ribosomal RNA small subunit methyltransferase H (339 aa).

Residues 40-42 (GGY), Asp-58, Phe-85, Asp-106, and Gln-113 contribute to the S-adenosyl-L-methionine site.

It belongs to the methyltransferase superfamily. RsmH family.

It is found in the cytoplasm. It carries out the reaction cytidine(1402) in 16S rRNA + S-adenosyl-L-methionine = N(4)-methylcytidine(1402) in 16S rRNA + S-adenosyl-L-homocysteine + H(+). Specifically methylates the N4 position of cytidine in position 1402 (C1402) of 16S rRNA. The polypeptide is Ribosomal RNA small subunit methyltransferase H (Parvibaculum lavamentivorans (strain DS-1 / DSM 13023 / NCIMB 13966)).